A 221-amino-acid chain; its full sequence is tRNA (guanine-N(7)-)-methyltransferase (221 aa).

S-adenosyl-L-methionine contacts are provided by Glu46, Asp71, and Asp120. Asp120 is an active-site residue. Residue Asp156 participates in substrate binding.

It belongs to the class I-like SAM-binding methyltransferase superfamily. TrmB family.

It carries out the reaction guanosine(46) in tRNA + S-adenosyl-L-methionine = N(7)-methylguanosine(46) in tRNA + S-adenosyl-L-homocysteine. It participates in tRNA modification; N(7)-methylguanine-tRNA biosynthesis. Catalyzes the formation of N(7)-methylguanine at position 46 (m7G46) in tRNA. The polypeptide is tRNA (guanine-N(7)-)-methyltransferase (Cytophaga hutchinsonii (strain ATCC 33406 / DSM 1761 / CIP 103989 / NBRC 15051 / NCIMB 9469 / D465)).